A 357-amino-acid polypeptide reads, in one-letter code: Dynein axonemal assembly factor 10 (357 aa).

WD repeat units follow at residues 80-127 (EFTN…IPIW), 132-170 (AHQGSISAIDAYADNLVVCGGKDGTIKVYDTRIKPNSAN), 184-223 (EQTNKSNCWSICTNDNNIIAGFENGDLNIYNLKTNSIQST), and 277-321 (EPNQ…IDKV).

Interacts with PIH1D1; the interaction associates DNAAF10 with the R2TP complex. Interacts with several dynein axonemal assembly factors.

It localises to the dynein axonemal particle. Key assembly factor specifically required for the stability of axonemal dynein heavy chains in cytoplasm. This is Dynein axonemal assembly factor 10 (dnaaf10) from Dictyostelium discoideum (Social amoeba).